The primary structure comprises 729 residues: ATP-dependent RNA helicase DHX15 homolog (729 aa).

Positions 1-25 are disordered; that stretch reads MSKRRIEVGETYGSKAKKDPEASSS. The region spanning 82 to 246 is the Helicase ATP-binding domain; sequence MRLLSLHQCI…FDNAPLMKVP (165 aa). 95-102 contacts ATP; it reads GETGSGKT. Positions 193–196 match the DEAH box motif; the sequence is DEAH. The 181-residue stretch at 271–451 folds into the Helicase C-terminal domain; sequence TVIQIHMCEE…TVVLQLKKLG (181 aa).

It belongs to the DEAD box helicase family. DEAH subfamily. DDX15/PRP43 sub-subfamily.

It carries out the reaction ATP + H2O = ADP + phosphate + H(+). Functionally, RNA helicase involved in mRNA processing and antiviral innate immunity. Acts as an activator of the p38 MAPK cascade. The polypeptide is ATP-dependent RNA helicase DHX15 homolog (Drosophila melanogaster (Fruit fly)).